The following is a 438-amino-acid chain: Putative B3 domain-containing protein Os04g0676650 (438 aa).

Positions 1–11 (MADARGSSSSS) are enriched in low complexity. Disordered regions lie at residues 1-30 (MADARGSSSSSGDGGGGEGKGGAGHGDFVG) and 225-285 (SSSH…MNQN). A compositionally biased stretch (gly residues) spans 12–30 (GDGGGGEGKGGAGHGDFVG). Residues 258–269 (RRSDMESEKNDD) show a composition bias toward basic and acidic residues. Polar residues predominate over residues 272–285 (DQTPVSEPPSMNQN). The TF-B3 DNA-binding region spans 302-404 (LRKELTNSDV…KFVVRGEKAI (103 aa)).

The protein resides in the nucleus. In Oryza sativa subsp. japonica (Rice), this protein is Putative B3 domain-containing protein Os04g0676650.